A 547-amino-acid polypeptide reads, in one-letter code: Chaperonin GroEL 1 (547 aa).

ATP contacts are provided by residues 30–33 (TLGP), Lys51, 87–91 (DGTTT), Gly415, and Asp496.

This sequence belongs to the chaperonin (HSP60) family. In terms of assembly, forms a cylinder of 14 subunits composed of two heptameric rings stacked back-to-back. Interacts with the co-chaperonin GroES.

The protein resides in the cytoplasm. The catalysed reaction is ATP + H2O + a folded polypeptide = ADP + phosphate + an unfolded polypeptide.. In terms of biological role, together with its co-chaperonin GroES, plays an essential role in assisting protein folding. The GroEL-GroES system forms a nano-cage that allows encapsulation of the non-native substrate proteins and provides a physical environment optimized to promote and accelerate protein folding. This is Chaperonin GroEL 1 from Rhodopseudomonas palustris (strain ATCC BAA-98 / CGA009).